We begin with the raw amino-acid sequence, 561 residues long: Arginine--tRNA ligase (561 aa).

Positions 129–139 (ANPTGPLHVGH) match the 'HIGH' region motif.

The protein belongs to the class-I aminoacyl-tRNA synthetase family. As to quaternary structure, monomer.

The protein resides in the cytoplasm. It carries out the reaction tRNA(Arg) + L-arginine + ATP = L-arginyl-tRNA(Arg) + AMP + diphosphate. The polypeptide is Arginine--tRNA ligase (Bordetella avium (strain 197N)).